Here is a 249-residue protein sequence, read N- to C-terminus: Protein obstructor-E (249 aa).

An N-terminal signal peptide occupies residues 1 to 21; that stretch reads MAKILISALLCVAMFGSMALG. In terms of domain architecture, Chitin-binding type-2 1 spans 22 to 80; it reads SPECPTPNGRFASGDQCDSYTECQDGTPVEKLCPDGLLFHQRTKATGECTYAPYSTCKE. An intrachain disulfide couples Cys54 to Cys70. N-linked (GlcNAc...) asparagine glycosylation occurs at Asn88. Chitin-binding type-2 domains are found at residues 90 to 148 and 170 to 227; these read TEEC…SCNA and VDVS…ECYA. 2 disulfide bridges follow: Cys124-Cys137 and Cys203-Cys216.

In terms of tissue distribution, uniformly expressed throughout the cuticle of third instar larva.

It is found in the secreted. The protein localises to the extracellular space. The protein resides in the extracellular matrix. In terms of biological role, chitin-binding protein that is important for the longitudinal contraction and lateral expansion of the larval cuticle during its conversion into the oval-shaped puparium case. Essential for survival to the second instar larval stage. Confers the orientated contractility and expandability of the larval cuticle by regulating the arrangement of chitin and the formation of supracellular ridges on the cuticle of third instar larvae. Essential for determining pupal body shape; required for the orientated shape change of the cuticle during metamorphosis which involves changes in the morphology of the supracellular ridges. Its function is as follows. Mainly involved in regulating pupal shape. Functionally, mainly involved in larvae survival, possibly by maintaining the normal morphology of the larval hindgut during development. The polypeptide is Protein obstructor-E (Drosophila melanogaster (Fruit fly)).